A 339-amino-acid chain; its full sequence is Protein RecA (339 aa).

66–73 serves as a coordination point for ATP; it reads GPESSGKT.

The protein belongs to the RecA family.

Its subcellular location is the cytoplasm. In terms of biological role, can catalyze the hydrolysis of ATP in the presence of single-stranded DNA, the ATP-dependent uptake of single-stranded DNA by duplex DNA, and the ATP-dependent hybridization of homologous single-stranded DNAs. It interacts with LexA causing its activation and leading to its autocatalytic cleavage. This chain is Protein RecA, found in Geobacter metallireducens (strain ATCC 53774 / DSM 7210 / GS-15).